The chain runs to 277 residues: Probable enoyl-CoA hydratase, mitochondrial (277 aa).

The transit peptide at 1-42 (MLKQVIKTVSSSQAPKKYFFKQFCTSTTEKKGRVGLVTLNRP) directs the protein to the mitochondrion. Residues 85 to 88 (ADIK) and Gly128 contribute to the substrate site.

The protein belongs to the enoyl-CoA hydratase/isomerase family. In terms of assembly, homohexamer; dimer of trimers.

It is found in the mitochondrion matrix. It carries out the reaction a (3S)-3-hydroxyacyl-CoA = a (2E)-enoyl-CoA + H2O. The enzyme catalyses a 4-saturated-(3S)-3-hydroxyacyl-CoA = a (3E)-enoyl-CoA + H2O. The catalysed reaction is (3S)-3-hydroxybutanoyl-CoA = (2E)-butenoyl-CoA + H2O. It catalyses the reaction 3-hydroxyisovaleryl-CoA = 3-methylbut-2-enoyl-CoA + H2O. It carries out the reaction 3-hydroxypropanoyl-CoA = acryloyl-CoA + H2O. The enzyme catalyses 3-hydroxybutanoyl-CoA = (2E)-butenoyl-CoA + H2O. Its pathway is lipid metabolism; fatty acid beta-oxidation. In terms of biological role, straight-chain enoyl-CoA thioesters from C4 up to at least C16 are processed, although with decreasing catalytic rate. This is Probable enoyl-CoA hydratase, mitochondrial (echs1) from Dictyostelium discoideum (Social amoeba).